A 113-amino-acid polypeptide reads, in one-letter code: B-type lectin plumieribetin (113 aa).

Residues 1–109 (NYLSKNDELR…STEIWNSDKN (109 aa)) enclose the Bulb-type lectin domain.

As to quaternary structure, homotetramer. Interacts with alpha-1-beta-1 integrin (ITGA1/ITGB1). Post-translationally, not glycosylated. Not N-glycosylated and not O-glycosylated with the mostcommon O-linked glycoconjugates. In terms of processing, the N-terminus is blocked. As to expression, expressed by sting venom glands and is also found in skin mucus. Not found in other tissues tested.

The protein resides in the secreted. In terms of biological role, may contribute to some of the local and systemic effects of envenomation by the scorpionfish. Preferentially recognizes mannose-containing carbohydrate structures, but its interaction with single mannose residues is weak. Potently inhibits alpha-1-beta-1 integrin (ITGA1/ITGB1) binding to basement membrane collagen IV in a divalent cation-independent manner. In addition, moderately inhibits both laminin binding integrins alpha-3-beta-1 (ITGA3/ITGB1) and alpha-7-beta-1 (ITGA7/ITGB1). Weakens the cell-collagen contacts, reduces cell spreading, and alters the actin cytoskeleton, after the compensating alpha-2-beta-1 integrin is blocked. On the cellular level, fails to completely detach hepatocarcinoma HepG2 cells and primary arterial smooth muscle cells from the collagen IV fragment CB3. This chain is B-type lectin plumieribetin, found in Scorpaena plumieri (Spotted scorpionfish).